The chain runs to 148 residues: MSRGDGYPKNIFLLCRDSGVPFEDLRLQCVFCTKELTSPELAAFCIRELNVVWKSGAPYGACARCLLFEGIKRRLKYWQYSCFVEGVEAETNESIYTQLIRCYMCHKPLVREEKDKHRNEKRRLHKISGYWRGSCLYCWSRCMGQSPR.

2 zinc fingers span residues cysteine 29–cysteine 65 and cysteine 102–cysteine 138.

Belongs to the papillomaviridae E6 protein family. Forms homodimers. Interacts with ubiquitin-protein ligase UBE3A/E6-AP; this interaction stimulates UBE3A ubiquitin activity. Interacts with host TP53 and EP300; this interaction inhibits TP53 activity.

It is found in the host cytoplasm. It localises to the host nucleus. Its function is as follows. Plays a major role in the induction and maintenance of cellular transformation. E6 associates with host UBE3A/E6-AP ubiquitin-protein ligase and modulates its activity. Sequesters tumor suppressor TP53 in the host cytoplasm and modulates its activity by interacting with host EP300 that results in the reduction of TP53 acetylation and activation. In turn, apoptosis induced by DNA damage is inhibited. E6 also protects host keratinocytes from apoptosis by mediating the degradation of host BAK1. May also inhibit host immune response. In Homo sapiens (Human), this protein is Protein E6.